An 83-amino-acid chain; its full sequence is Large ribosomal subunit protein eL43 (83 aa).

Zn(2+)-binding residues include Cys38, Cys41, Cys56, and Cys59. The C4-type zinc-finger motif lies at 38-59 (CKKCGKKAVKRSGTGIWECRHC).

This sequence belongs to the eukaryotic ribosomal protein eL43 family. Putative zinc-binding subfamily. As to quaternary structure, part of the 50S ribosomal subunit. Zn(2+) is required as a cofactor.

Binds to the 23S rRNA. In Archaeoglobus fulgidus (strain ATCC 49558 / DSM 4304 / JCM 9628 / NBRC 100126 / VC-16), this protein is Large ribosomal subunit protein eL43.